A 319-amino-acid chain; its full sequence is ATP-dependent 6-phosphofructokinase (319 aa).

G11 contributes to the ATP binding site. R21 to R25 serves as a coordination point for ADP. ATP-binding positions include R72–C73 and G102–S105. D103 is a Mg(2+) binding site. T125–D127 serves as a coordination point for substrate. The active-site Proton acceptor is the D127. R154 is an ADP binding site. Residues R162 and M169–R171 contribute to the substrate site. Residues G185–E187, R211, and K213–H215 contribute to the ADP site. Residues E222, R243, and H249–R252 each bind substrate.

It belongs to the phosphofructokinase type A (PFKA) family. ATP-dependent PFK group I subfamily. Prokaryotic clade 'B1' sub-subfamily. As to quaternary structure, homotetramer. Mg(2+) is required as a cofactor.

It localises to the cytoplasm. It catalyses the reaction beta-D-fructose 6-phosphate + ATP = beta-D-fructose 1,6-bisphosphate + ADP + H(+). It participates in carbohydrate degradation; glycolysis; D-glyceraldehyde 3-phosphate and glycerone phosphate from D-glucose: step 3/4. With respect to regulation, allosterically activated by ADP and other diphosphonucleosides, and allosterically inhibited by phosphoenolpyruvate. Its function is as follows. Catalyzes the phosphorylation of D-fructose 6-phosphate to fructose 1,6-bisphosphate by ATP, the first committing step of glycolysis. The chain is ATP-dependent 6-phosphofructokinase from Bacillus cereus (strain ATCC 14579 / DSM 31 / CCUG 7414 / JCM 2152 / NBRC 15305 / NCIMB 9373 / NCTC 2599 / NRRL B-3711).